The following is a 227-amino-acid chain: Cytochrome c oxidase subunit 2 (227 aa).

Over 1–14 (MAHRAQVGLQDATS) the chain is Mitochondrial intermembrane. A helical transmembrane segment spans residues 15–45 (PIMEELVIFHDHALMIIFLICFLVLYALFLT). The Mitochondrial matrix segment spans residues 46–59 (LTTKLTNTNISDAQ). Residues 60 to 87 (EMETIWTTLPAIILILIALPSLRILYLT) form a helical membrane-spanning segment. The Mitochondrial intermembrane segment spans residues 88–227 (DEINDPSFTI…IFEMGPVFAL (140 aa)). 6 residues coordinate Cu cation: H161, C196, E198, C200, H204, and M207. Position 198 (E198) interacts with Mg(2+).

Belongs to the cytochrome c oxidase subunit 2 family. Component of the cytochrome c oxidase (complex IV, CIV), a multisubunit enzyme composed of 14 subunits. The complex is composed of a catalytic core of 3 subunits MT-CO1, MT-CO2 and MT-CO3, encoded in the mitochondrial DNA, and 11 supernumerary subunits COX4I, COX5A, COX5B, COX6A, COX6B, COX6C, COX7A, COX7B, COX7C, COX8 and NDUFA4, which are encoded in the nuclear genome. The complex exists as a monomer or a dimer and forms supercomplexes (SCs) in the inner mitochondrial membrane with NADH-ubiquinone oxidoreductase (complex I, CI) and ubiquinol-cytochrome c oxidoreductase (cytochrome b-c1 complex, complex III, CIII), resulting in different assemblies (supercomplex SCI(1)III(2)IV(1) and megacomplex MCI(2)III(2)IV(2)). Found in a complex with TMEM177, COA6, COX18, COX20, SCO1 and SCO2. Interacts with TMEM177 in a COX20-dependent manner. Interacts with COX20. Interacts with COX16. The cofactor is Cu cation.

The protein localises to the mitochondrion inner membrane. The catalysed reaction is 4 Fe(II)-[cytochrome c] + O2 + 8 H(+)(in) = 4 Fe(III)-[cytochrome c] + 2 H2O + 4 H(+)(out). Its function is as follows. Component of the cytochrome c oxidase, the last enzyme in the mitochondrial electron transport chain which drives oxidative phosphorylation. The respiratory chain contains 3 multisubunit complexes succinate dehydrogenase (complex II, CII), ubiquinol-cytochrome c oxidoreductase (cytochrome b-c1 complex, complex III, CIII) and cytochrome c oxidase (complex IV, CIV), that cooperate to transfer electrons derived from NADH and succinate to molecular oxygen, creating an electrochemical gradient over the inner membrane that drives transmembrane transport and the ATP synthase. Cytochrome c oxidase is the component of the respiratory chain that catalyzes the reduction of oxygen to water. Electrons originating from reduced cytochrome c in the intermembrane space (IMS) are transferred via the dinuclear copper A center (CU(A)) of subunit 2 and heme A of subunit 1 to the active site in subunit 1, a binuclear center (BNC) formed by heme A3 and copper B (CU(B)). The BNC reduces molecular oxygen to 2 water molecules using 4 electrons from cytochrome c in the IMS and 4 protons from the mitochondrial matrix. In Pongo pygmaeus (Bornean orangutan), this protein is Cytochrome c oxidase subunit 2 (MT-CO2).